Reading from the N-terminus, the 248-residue chain is Large ribosomal subunit protein uL4 (248 aa).

Positions 45 to 105 are disordered; that stretch reads PYGADPYAGM…KDQSKSVNTK (61 aa). A compositionally biased stretch (basic and acidic residues) spans 92-105; sequence PKAEKDQSKSVNTK.

It belongs to the universal ribosomal protein uL4 family. Part of the 50S ribosomal subunit.

Its function is as follows. One of the primary rRNA binding proteins, this protein initially binds near the 5'-end of the 23S rRNA. It is important during the early stages of 50S assembly. It makes multiple contacts with different domains of the 23S rRNA in the assembled 50S subunit and ribosome. In terms of biological role, forms part of the polypeptide exit tunnel. The polypeptide is Large ribosomal subunit protein uL4 (Haloquadratum walsbyi (strain DSM 16790 / HBSQ001)).